An 85-amino-acid chain; its full sequence is Double gene block protein 2 (85 aa).

Over 1-2 (MK) the chain is Lumenal. Residues 3–23 (VLLVTGVLGLLLLIKWKSQST) traverse the membrane as a helical segment. Residues 24–36 (STSNQTCQCPTSP) lie on the Cytoplasmic side of the membrane. The helical transmembrane segment at 37–56 (WVIYAFYNSLSLVLLLCHLI) threads the bilayer. The Lumenal segment spans residues 57-85 (PEIKPIHTSYNTHDSSKQQHISINTGNGK).

The protein belongs to the carmovirus double gene block protein 2 family.

The protein resides in the host endoplasmic reticulum membrane. Its function is as follows. Cell-to-cell movement function. In Turnip crinkle virus (TCV), this protein is Double gene block protein 2.